Reading from the N-terminus, the 383-residue chain is Vesicle-associated membrane protein-associated protein scs2 (383 aa).

The MSP domain occupies 1–123 (MSVECSGELF…SIFDRKIRCV (123 aa)). Over 1–362 (MSVECSGELF…TGASLTESPG (362 aa)) the chain is Cytoplasmic. Residues 127–146 (KQPPQSADKQVENTSTSNPP) are compositionally biased toward polar residues. 2 disordered regions span residues 127–160 (KQPP…SSVG) and 233–359 (ESAS…SLTE). Phosphoserine is present on residues serine 236, serine 237, serine 259, serine 261, and serine 268. A compositionally biased stretch (basic and acidic residues) spans 241–263 (DVARSKVQDIIDNEIPKPSESPR). Residues 289–300 (FDTKKNDFDSKL) show a composition bias toward basic and acidic residues. The span at 347–359 (ADPSSSTGASLTE) shows a compositional bias: polar residues. Residues 363 to 383 (IPPNIVIILCLIFFLIGYLFF) form a helical; Anchor for type IV membrane protein membrane-spanning segment.

It belongs to the VAMP-associated protein (VAP) (TC 9.B.17) family. Interacts (via MSP domain) with duc1 (via FFAT-motif); the interaction is direct and serves to restrict the localization of duc1 to areas of cell membrane-endoplasmic reticulum contact sites, and away from the cell division site. Interacts with epr1.

It is found in the endoplasmic reticulum membrane. Vesicle-associated membrane protein-associated protein (VAP) implicated in maintaining the cortical endoplasmic reticulum (ER)-plasma membrane (PM) attachment. ER-PM contacts function to modulate the distribution of contractile ring components to ensure robust ring assembly. ER-PM contacts function also in controlling exocytosis and maintenance of cell polarity regulating cell shape. VAPs play an important role in regulating eisosome assembly. VAPs also contribute to ER-phagy by tethering atg8 to the ER membrane, but also by maintaining the ER-plasma membrane contact. Restricts the localization of duc1 away from the site of cell division. The polypeptide is Vesicle-associated membrane protein-associated protein scs2 (scs2) (Schizosaccharomyces pombe (strain 972 / ATCC 24843) (Fission yeast)).